Consider the following 811-residue polypeptide: MARNSKATDTPKTVVEKQSRKRKQDVEDAEESSSDEELQVEGILDDAASEDEESDSEDADKEDDEEEELEGDSDEEFNELLGEEEDLSDVDSEEFSDEPRDETASITDKLSGTKIRSYSNATEDEENEVHTKFSDGRPRIIKPEINPIYDSDDSDNENFNTIGNIPLSAYEEMPHIGYDINGKRIMRPAKGSALDQLLESIDLPEGWTGLFDQNTGTSLKITDDELELIRKIQAQESTDENINPYEPTIEWFTSKTEVMPLTAVPEPKRRFVPSKHEAKKVMKIVRAIREGRIVPPNKVKEQQEEEKYNFDLWNDNESETKDHIMNLRAPKLPPPTNEESYNPPEEYLMDEEEKKKWLEMEPEDRDKNYIPQKYNSLRKVPGYQEGLRERFERCLDLYLAPRTRHNKLNIDPDSLIPELPSPKDLRPFPIRCSTIFQGHTEKIRTLSISPDGLWLATGSDDGSVRIWEILTGRQVYKTVLVADDNTDDNIESLEWNPDSNSGILAAIAGEHIYLIVPPIFGFDIENNGRLRIESGWGYDTFGNKSKTKNSNIKVNSDDEDEEVEKADTNTGKKDVCKWFTPNTEQSQAGISAIIQCRKTVKKISWHRKGDYFVTVSPDSGHSSVLIHQLSKHLSQSPFKKSKGIIMDAKFHPFKPQLFVASQRYIRIYDLAQQVLVKKLMPGARWLSNIDIHPRGDNLLASSYDKRVLWHDLDLSSTPYKTLRYHDKAVRSIKFHKANLPLFASASDDGSIHVFHGTVYDDLMTNPLLVPLKKLTGHKIINSLGVLDLVWHPKEAWLFSAGADGTARLWTT.

Polar residues predominate over residues 1–11 (MARNSKATDTP). Residues 1-138 (MARNSKATDT…VHTKFSDGRP (138 aa)) form a disordered region. Residues 27-96 (EDAEESSSDE…LSDVDSEEFS (70 aa)) show a composition bias toward acidic residues. A compositionally biased stretch (polar residues) spans 104-121 (ASITDKLSGTKIRSYSNA). Positions 128 to 138 (EVHTKFSDGRP) are enriched in basic and acidic residues. A required for interaction with NOP7 region spans residues 270–386 (RFVPSKHEAK…LRKVPGYQEG (117 aa)). The tract at residues 386–422 (GLRERFERCLDLYLAPRTRHNKLNIDPDSLIPELPSP) is required for interaction with YTM1. 2 WD repeats span residues 438 to 477 (GHTEKIRTLSISPDGLWLATGSDDGSVRIWEILTGRQVYK) and 485 to 525 (NTDD…FDIE). The interval 547–566 (TKNSNIKVNSDDEDEEVEKA) is disordered. WD repeat units follow at residues 595 to 637 (QCRK…SQSP), 640 to 678 (KSKGIIMDAKFHPFKPQLFVASQRYIRIYDLAQQVLVKK), 681 to 720 (PGARWLSNIDIHPRGDNLLASSYDKRVLWHDLDLSSTPYK), 724 to 764 (YHDK…DLMT), and 780 to 811 (INSLGVLDLVWHPKEAWLFSAGADGTARLWTT).

The protein belongs to the WD repeat BOP1/ERB1 family. Component of the NOP7 complex, composed of ERB1, NOP7 and YTM1. The complex is held together by ERB1, which interacts with NOP7 via its N-terminal domain and with YTM1 via a high-affinity interaction between the seven-bladed beta-propeller domains of the 2 proteins. The NOP7 complex associates with the 66S pre-ribosome.

Its subcellular location is the nucleus. It localises to the nucleolus. The protein resides in the nucleoplasm. Component of the NOP7 complex, which is required for maturation of the 25S and 5.8S ribosomal RNAs and formation of the 60S ribosome. The protein is Ribosome biogenesis protein ERB1 of Debaryomyces hansenii (strain ATCC 36239 / CBS 767 / BCRC 21394 / JCM 1990 / NBRC 0083 / IGC 2968) (Yeast).